A 336-amino-acid chain; its full sequence is ATP-dependent 6-phosphofructokinase (336 aa).

G11 contacts ATP. 21-25 contributes to the ADP binding site; the sequence is RAVVR. Residues 72 to 73 and 102 to 105 each bind ATP; these read RY and GDGS. D103 contributes to the Mg(2+) binding site. 125 to 127 lines the substrate pocket; it reads TID. D127 serves as the catalytic Proton acceptor. Residue R154 coordinates ADP. Substrate is bound by residues R162 and 169 to 171; that span reads MGR. ADP-binding positions include 185–187, K211, and 213–215; these read GAD and KKH. Substrate is bound by residues E222, R244, and 250–253; that span reads HIQR.

This sequence belongs to the phosphofructokinase type A (PFKA) family. ATP-dependent PFK group I subfamily. Prokaryotic clade 'B1' sub-subfamily. As to quaternary structure, homotetramer. Mg(2+) is required as a cofactor.

The protein localises to the cytoplasm. The catalysed reaction is beta-D-fructose 6-phosphate + ATP = beta-D-fructose 1,6-bisphosphate + ADP + H(+). Its pathway is carbohydrate degradation; glycolysis; D-glyceraldehyde 3-phosphate and glycerone phosphate from D-glucose: step 3/4. With respect to regulation, allosterically activated by ADP and other diphosphonucleosides, and allosterically inhibited by phosphoenolpyruvate. Its function is as follows. Catalyzes the phosphorylation of D-fructose 6-phosphate to fructose 1,6-bisphosphate by ATP, the first committing step of glycolysis. In Streptococcus sanguinis (strain SK36), this protein is ATP-dependent 6-phosphofructokinase.